The chain runs to 209 residues: Small ribosomal subunit protein uS4 (209 aa).

The segment at 22–45 (RGRNPLLRKPNPPGQHGMQRKKKS) is disordered. Positions 93–154 (CRLDNIVYRL…KSKRLAIVTE (62 aa)) constitute an S4 RNA-binding domain.

The protein belongs to the universal ribosomal protein uS4 family. Part of the 30S ribosomal subunit. Contacts protein S5. The interaction surface between S4 and S5 is involved in control of translational fidelity.

Functionally, one of the primary rRNA binding proteins, it binds directly to 16S rRNA where it nucleates assembly of the body of the 30S subunit. With S5 and S12 plays an important role in translational accuracy. This is Small ribosomal subunit protein uS4 from Chlamydia trachomatis serovar A (strain ATCC VR-571B / DSM 19440 / HAR-13).